The primary structure comprises 552 residues: 5'-AMP-activated protein kinase catalytic subunit alpha-2 (552 aa).

In terms of domain architecture, Protein kinase spans 16-268; sequence YVLGDTLGVG…IKDIREHEWF (253 aa). Residues 22-30 and lysine 45 contribute to the ATP site; that span reads LGVGTFGKV. Residue aspartate 139 is the Proton acceptor of the active site. Position 172 is a phosphothreonine; by LKB1 and CaMKK2 (threonine 172). Position 258 is a phosphothreonine (threonine 258). The interval 291-376 is AIS; it reads EAVKEVCEKF…PERMPPLIAD (86 aa). Serine 377 is modified (phosphoserine). The disordered stretch occupies residues 478–520; it reads EQRSGSSTPQRSCSAAGLHRPRSSVDSSTAENHSLSGSLTGSL. A compositionally biased stretch (polar residues) spans 480–490; that stretch reads RSGSSTPQRSC. Position 491 is a phosphoserine (serine 491). Over residues 501-510 the composition is skewed to polar residues; sequence SVDSSTAENH. Low complexity predominate over residues 511 to 520; that stretch reads SLSGSLTGSL.

The protein belongs to the protein kinase superfamily. CAMK Ser/Thr protein kinase family. SNF1 subfamily. AMPK is a heterotrimer of an alpha catalytic subunit (PRKAA1 or PRKAA2), a beta (PRKAB1 or PRKAB2) and a gamma non-catalytic subunits (PRKAG1, PRKAG2 or PRKAG3). Interacts with FNIP1 and FNIP2. Associates with internalized INSR complexes on Golgi/endosomal membranes; PRKAA2/AMPK2 together with ATIC and HACD3/PTPLAD1 is proposed to be part of a signaling network regulating INSR autophosphorylation and endocytosis. Interacts with DUSP29. Interacts with ARF6. The phosphorylated form at Thr-172 mediated by CamKK2 interacts with ACSS2. The cofactor is Mg(2+). Post-translationally, ubiquitinated. Phosphorylated at Thr-172 by STK11/LKB1 in complex with STE20-related adapter-alpha (STRADA) pseudo kinase and CAB39. Also phosphorylated at Thr-172 by CAMKK2; triggered by a rise in intracellular calcium ions, without detectable changes in the AMP/ATP ratio. CAMKK1 can also phosphorylate Thr-172, but at much lower level. Dephosphorylated by protein phosphatase 2A and 2C (PP2A and PP2C). Phosphorylated by ULK1; leading to negatively regulate AMPK activity and suggesting the existence of a regulatory feedback loop between ULK1 and AMPK. Dephosphorylated by PPM1A and PPM1B at Thr-172 (mediated by STK11/LKB1). In terms of tissue distribution, skeletal muscle, lower levels in liver, heart and kidney.

The protein localises to the cytoplasm. The protein resides in the nucleus. The enzyme catalyses L-seryl-[protein] + ATP = O-phospho-L-seryl-[protein] + ADP + H(+). It catalyses the reaction L-threonyl-[protein] + ATP = O-phospho-L-threonyl-[protein] + ADP + H(+). It carries out the reaction L-seryl-[acetyl-CoA carboxylase] + ATP = O-phospho-L-seryl-[acetyl-CoA carboxylase] + ADP + H(+). The catalysed reaction is L-seryl-[3-hydroxy-3-methylglutaryl-coenzyme A reductase] + ATP = O-phospho-L-seryl-[3-hydroxy-3-methylglutaryl-coenzyme A reductase] + ADP + H(+). With respect to regulation, activated by phosphorylation on Thr-172. Binding of AMP to non-catalytic gamma subunit (PRKAG1, PRKAG2 or PRKAG3) results in allosteric activation, inducing phosphorylation on Thr-172. AMP-binding to gamma subunit also sustains activity by preventing dephosphorylation of Thr-172. ADP also stimulates Thr-172 phosphorylation, without stimulating already phosphorylated AMPK. ATP promotes dephosphorylation of Thr-172, rendering the enzyme inactive. Under physiological conditions AMPK mainly exists in its inactive form in complex with ATP, which is much more abundant than AMP. Selectively inhibited by compound C (6-[4-(2-Piperidin-1-yl-ethoxy)-phenyl)]-3-pyridin-4-yl-pyyrazolo[1,5-a] pyrimidine. Activated by resveratrol, a natural polyphenol present in red wine, and S17834, a synthetic polyphenol. Salicylate/aspirin directly activates kinase activity, primarily by inhibiting Thr-172 dephosphorylation. Its function is as follows. Catalytic subunit of AMP-activated protein kinase (AMPK), an energy sensor protein kinase that plays a key role in regulating cellular energy metabolism. In response to reduction of intracellular ATP levels, AMPK activates energy-producing pathways and inhibits energy-consuming processes: inhibits protein, carbohydrate and lipid biosynthesis, as well as cell growth and proliferation. AMPK acts via direct phosphorylation of metabolic enzymes, and by longer-term effects via phosphorylation of transcription regulators. Regulates lipid synthesis by phosphorylating and inactivating lipid metabolic enzymes such as ACACA, ACACB, GYS1, HMGCR and LIPE; regulates fatty acid and cholesterol synthesis by phosphorylating acetyl-CoA carboxylase (ACACA and ACACB) and hormone-sensitive lipase (LIPE) enzymes, respectively. Promotes lipolysis of lipid droplets by mediating phosphorylation of isoform 1 of CHKA (CHKalpha2). Regulates insulin-signaling and glycolysis by phosphorylating IRS1, PFKFB2 and PFKFB3. Involved in insulin receptor/INSR internalization. AMPK stimulates glucose uptake in muscle by increasing the translocation of the glucose transporter SLC2A4/GLUT4 to the plasma membrane, possibly by mediating phosphorylation of TBC1D4/AS160. Regulates transcription and chromatin structure by phosphorylating transcription regulators involved in energy metabolism such as CRTC2/TORC2, FOXO3, histone H2B, HDAC5, MEF2C, MLXIPL/ChREBP, EP300, HNF4A, p53/TP53, SREBF1, SREBF2 and PPARGC1A. Acts as a key regulator of glucose homeostasis in liver by phosphorylating CRTC2/TORC2, leading to CRTC2/TORC2 sequestration in the cytoplasm. In response to stress, phosphorylates 'Ser-36' of histone H2B (H2BS36ph), leading to promote transcription. Acts as a key regulator of cell growth and proliferation by phosphorylating FNIP1, TSC2, RPTOR, WDR24 and ATG1/ULK1: in response to nutrient limitation, negatively regulates the mTORC1 complex by phosphorylating RPTOR component of the mTORC1 complex and by phosphorylating and activating TSC2. Also phosphorylates and inhibits GATOR2 subunit WDR24 in response to nutrient limitation, leading to suppress glucose-mediated mTORC1 activation. In response to energetic stress, phosphorylates FNIP1, inactivating the non-canonical mTORC1 signaling, thereby promoting nuclear translocation of TFEB and TFE3, and inducing transcription of lysosomal or autophagy genes. In response to nutrient limitation, promotes autophagy by phosphorylating and activating ATG1/ULK1. In that process, it also activates WDR45/WIPI4. Phosphorylates CASP6, thereby preventing its autoprocessing and subsequent activation. AMPK also acts as a regulator of circadian rhythm by mediating phosphorylation of CRY1, leading to destabilize it. May regulate the Wnt signaling pathway by phosphorylating CTNNB1, leading to stabilize it. Also acts as a regulator of cellular polarity by remodeling the actin cytoskeleton; probably by indirectly activating myosin. Also phosphorylates CFTR, EEF2K, KLC1, NOS3 and SLC12A1. Plays an important role in the differential regulation of pro-autophagy (composed of PIK3C3, BECN1, PIK3R4 and UVRAG or ATG14) and non-autophagy (composed of PIK3C3, BECN1 and PIK3R4) complexes, in response to glucose starvation. Can inhibit the non-autophagy complex by phosphorylating PIK3C3 and can activate the pro-autophagy complex by phosphorylating BECN1. Upon glucose starvation, promotes ARF6 activation in a kinase-independent manner leading to cell migration. Upon glucose deprivation mediates the phosphorylation of ACSS2 at 'Ser-659', which exposes the nuclear localization signal of ACSS2, required for its interaction with KPNA1 and nuclear translocation. Upon stress, regulates mitochondrial fragmentation through phosphorylation of MTFR1L. The protein is 5'-AMP-activated protein kinase catalytic subunit alpha-2 (Prkaa2) of Rattus norvegicus (Rat).